The primary structure comprises 480 residues: G-protein coupled receptor seb-2 (480 aa).

Over 1–222 the chain is Extracellular; sequence MNPSISTAGA…CMSNGDVEAR (222 aa). Asparagine 95 is a glycosylation site (N-linked (GlcNAc...) asparagine). Residues 223–243 form a helical membrane-spanning segment; it reads ILAGLLTYSASVIFLIPAVFL. The Cytoplasmic segment spans residues 244-261; sequence LTLLRPIRCQPMFILHRH. Residues 262 to 282 form a helical membrane-spanning segment; the sequence is LLISCLLYGAFYLITVSLFVV. Residues 283 to 305 lie on the Extracellular side of the membrane; it reads NDAPLSSQVFQNHLFCRLLFSIQ. A helical transmembrane segment spans residues 306–328; it reads LRYLRLTNFTWMLAEAVYLWRLL. Topologically, residues 329-343 are cytoplasmic; the sequence is HTAQHSEGETLRSYK. Residues 344–364 form a helical membrane-spanning segment; the sequence is VICWGVPGVITVVYIFVRSLN. Over 365–386 the chain is Extracellular; sequence DDVGMCWIENSTVAWIEWMIIT. A helical transmembrane segment spans residues 387 to 407; it reads PSLLAMGVNLLLLGLIVYILV. The Cytoplasmic portion of the chain corresponds to 408-423; it reads KKLRCDPHLERIQYRK. A helical transmembrane segment spans residues 424 to 444; the sequence is AVRGALMLIPVFGVQQLLTIY. Residues 445 to 480 lie on the Extracellular side of the membrane; that stretch reads RFRNVCLIYRLLHKSFCRRMCSEILVITSGEAGSRS.

The protein belongs to the G-protein coupled receptor 2 family. Present in the head body-wall muscles from the L1 larval stage through to adulthood. Also expressed between L4 and the adult molt in vulval vm1 muscle cells. These cells play a role in opening the vulva during egg laying.

The protein resides in the cell membrane. Not known. Putative receptor. The chain is G-protein coupled receptor seb-2 from Caenorhabditis elegans.